The primary structure comprises 518 residues: Dihydro-ML-236C monooxygenase mlcC (518 aa).

At 1–31 the chain is on the cytoplasmic side; the sequence is MLGQVLLTVESYQWVSTPQALVAVAVLLSLI. A helical; Signal-anchor for type II membrane protein membrane pass occupies residues 32–48; sequence AYRLRGRQSELQVYNPK. Residues 49 to 518 are Lumenal-facing; that stretch reads KWWELTTMRA…EDIPLPHDRC (470 aa). Residue Cys-454 coordinates heme.

The protein belongs to the cytochrome P450 family. The cofactor is heme.

It is found in the endoplasmic reticulum membrane. It carries out the reaction dihydro-ML-236C carboxylate + reduced [NADPH--hemoprotein reductase] + O2 = ML-236C carboxylate + oxidized [NADPH--hemoprotein reductase] + 2 H2O + H(+). It catalyses the reaction ML-236C carboxylate + reduced [NADPH--hemoprotein reductase] + O2 = ML-236A carboxylate + oxidized [NADPH--hemoprotein reductase] + H2O + H(+). Its pathway is polyketide biosynthesis. Its function is as follows. Dihydro-ML-236C carboxylate monooxygenase; part of the gene cluster that mediates the biosynthesis of compactin, also known as mevastatin or ML-236B, and which acts as a potent competitive inhibitor of HMG-CoA reductase. Compactin biosynthesis is performed in two stages. The first stage is catalyzed by the nonaketide synthase mlcA, which belongs to type I polyketide synthases and catalyzes the iterative nine-step formation of the polyketide. This PKS stage is completed by the action of dehydrogenase mlcG, which catalyzes the NADPH-dependent reduction of the unsaturated tetra-, penta- and heptaketide intermediates that arise during the mlcA-mediated biosynthesis of the nonaketide chain and leads to dihydro-ML-236C carboxylate. Covalently bound dihydro-ML-236C carboxylate is released from mlcA by the mlcF esterase. Conversion of dihydro-ML-236C carboxylate into ML-236A carboxylate is subsequently performed with the participation of molecular oxygen and P450 monoogygenase mlcC. Finally, mlcH performs the conversion of ML-236A carboxylate to ML-236B/compactin carboxylate through the addition of the side-chain diketide moiety produced by the diketide synthase mlcB. The polypeptide is Dihydro-ML-236C monooxygenase mlcC (Penicillium citrinum).